Reading from the N-terminus, the 444-residue chain is MAGGMKVAVSPAVGPGPWGSGVGGGGTVRLLLILSGCLVYGTAETDVNVVMLQESQVCEKRASQQFCYTNVLIPKWHDIWTRIQIRVNSSRLVRVTQVENEEKLKELEQFSIWNFFSSFLKEKLNDTYVNVGLYSTKTCLKVEIIEKDTKYSVIVIRRFDPKLFLVFLLGLMLFFCGDLLSRSQIFYYSTGMTVGIVASLLIIIFILSKFMPKKSPIYVILVGGWSFSLYLIQLVFKNLQEIWRCYWQYLLSYVLTVGFMSFAVCYKYGPLENERSINLLTWTLQLMGLCFMYSGIQIPHIALAIIIIALCTKNLEHPIQWLYITCRKVCKGAEKPVPPRLLTEEEYRIQGEVETRKALEELREFCNSPDCSAWKTVSRIQSPKRFADFVEGSSHLTPNEVSVHEQEYGLGSIIAQDEIYEEASSEEEDSYSRCPAITQNNFLT.

The first 43 residues, 1–43 (MAGGMKVAVSPAVGPGPWGSGVGGGGTVRLLLILSGCLVYGTA), serve as a signal peptide directing secretion. Residue N125 is glycosylated (N-linked (GlcNAc...) asparagine). Transmembrane regions (helical) follow at residues 161–181 (PKLF…DLLS), 186–206 (FYYS…IIFI), 216–236 (PIYV…QLVF), 245–265 (CYWQ…FAVC), and 289–309 (LCFM…IIIA). The interval 186-297 (FYYSTGMTVG…GLCFMYSGIQ (112 aa)) is a; required for its colocalization with lamins at the nuclear envelope. The interval 336 to 405 (PVPPRLLTEE…LTPNEVSVHE (70 aa)) is b; required for interaction with RAN-GTP. The required for nuclear localization stretch occupies residues 336–444 (PVPPRLLTEE…PAITQNNFLT (109 aa)). Residues S368, S424, and S425 each carry the phosphoserine modification.

It belongs to the NEMP family. In terms of assembly, homooligomer. Interacts with RAN-GTP. Interacts with EMD. In terms of processing, phosphorylation may regulate its interaction with RAN-GTP.

It is found in the nucleus inner membrane. It localises to the nucleus envelope. Functionally, together with EMD, contributes to nuclear envelope stiffness in germ cells. Required for female fertility. Essential for normal erythropoiesis. Required for efficient nuclear envelope opening and enucleation during the late stages of erythroblast maturation. This is Nuclear envelope integral membrane protein 1 (NEMP1) from Homo sapiens (Human).